We begin with the raw amino-acid sequence, 631 residues long: Glutathione S-transferase C-terminal domain-containing protein (631 aa).

Residues 128–330 (LGFKKTCLKA…QEVPRVQTAA (203 aa)) enclose the GST C-terminal domain. 2 disordered regions span residues 188 to 233 (HNDD…SSSA) and 345 to 373 (TTSS…GGPR). Positions 211–224 (AKEKTKSKGHRQET) are enriched in basic and acidic residues. Position 231 is a phosphoserine (Ser-231).

Belongs to the GSTCD family.

It localises to the cytoplasm. This chain is Glutathione S-transferase C-terminal domain-containing protein (GSTCD), found in Bos taurus (Bovine).